Consider the following 192-residue polypeptide: E3 ubiquitin-protein ligase RNF183 (192 aa).

The Cytoplasmic segment spans residues 1–161 (MAEQQGRELE…RECFRNPQFR (161 aa)). The RING-type zinc finger occupies 13-60 (CPVCWNPFNNTFHTPKMLDCCHSFCVECLAHLSLVTPARRRLLCPLCR). The helical; Anchor for type IV membrane protein transmembrane segment at 162 to 182 (IFAYLMAVILSVTLLLIFSIF) threads the bilayer. At 183-192 (WTKQFLWGVG) the chain is on the lumenal side.

In terms of assembly, interacts with FATE1. Interacts with SEC16A. Interacts with BCL2L1. Post-translationally, autoubiquitinated (in vitro). As to expression, kidney and testis.

The protein resides in the endoplasmic reticulum membrane. Its subcellular location is the endoplasmic reticulum. It localises to the golgi apparatus. It is found in the cis-Golgi network membrane. The protein localises to the lysosome membrane. The catalysed reaction is S-ubiquitinyl-[E2 ubiquitin-conjugating enzyme]-L-cysteine + [acceptor protein]-L-lysine = [E2 ubiquitin-conjugating enzyme]-L-cysteine + N(6)-ubiquitinyl-[acceptor protein]-L-lysine.. The protein operates within protein modification; protein ubiquitination. Functionally, acts as an E3 ubiquitin ligase catalyzing the covalent attachment of ubiquitin moieties onto substrate proteins. Triggers apoptosis in response to prolonged ER stress by mediating the polyubiquitination and subsequent proteasomal degradation of BCL2L1. May collaborate with FATE1 to restrain BIK protein levels thus regulating apoptotic signaling. This is E3 ubiquitin-protein ligase RNF183 (RNF183) from Homo sapiens (Human).